Consider the following 208-residue polypeptide: N-hydroxyputrescine acetyltransferase (208 aa).

This sequence belongs to the IucB family.

The enzyme catalyses N-hydroxyputrescine + acetyl-CoA = N(1)-acetyl-N(1)-hydroxyputrescine + CoA. It participates in siderophore biosynthesis. Functionally, N-acetyltransferase involved in the biosynthesis of fimsbactin A, the major siderophore produced by A.baumannii. Catalyzes the acetylation of N-hydroxyputrescine to form N(1)-acetyl-N(1)-hydroxyputrescine (ahPutr). This is N-hydroxyputrescine acetyltransferase from Acinetobacter baumannii (strain ATCC 17978 / DSM 105126 / CIP 53.77 / LMG 1025 / NCDC KC755 / 5377).